The sequence spans 597 residues: Elongation factor 4 (597 aa).

The 183-residue stretch at 2–184 folds into the tr-type G domain; sequence DHIRNFSIIA…SLIAKVPPPK (183 aa). GTP is bound by residues 14 to 19 and 131 to 134; these read DHGKST and NKID.

Belongs to the TRAFAC class translation factor GTPase superfamily. Classic translation factor GTPase family. LepA subfamily.

The protein localises to the cell inner membrane. It carries out the reaction GTP + H2O = GDP + phosphate + H(+). In terms of biological role, required for accurate and efficient protein synthesis under certain stress conditions. May act as a fidelity factor of the translation reaction, by catalyzing a one-codon backward translocation of tRNAs on improperly translocated ribosomes. Back-translocation proceeds from a post-translocation (POST) complex to a pre-translocation (PRE) complex, thus giving elongation factor G a second chance to translocate the tRNAs correctly. Binds to ribosomes in a GTP-dependent manner. The polypeptide is Elongation factor 4 (Burkholderia ambifaria (strain MC40-6)).